Here is a 64-residue protein sequence, read N- to C-terminus: MNLNVVNRELKVGQIKMNGVSSSALFLIGDANLLILSSILDTPFETVTEGPFVPLVTDVPPTPG.

Functionally, required for the formation of functionally normal spores. Could be involved in the establishment of normal spore coat structure and/or permeability, which allows the access of germinants to their receptor. This Bacillus cereus protein is Probable spore germination protein GerPD (gerPD).